We begin with the raw amino-acid sequence, 175 residues long: Ribosome maturation factor RimM (175 aa).

The PRC barrel domain maps to 97-169 (EDKFYFHEII…TVRVITPEGL (73 aa)).

The protein belongs to the RimM family. Binds ribosomal protein uS19.

Its subcellular location is the cytoplasm. In terms of biological role, an accessory protein needed during the final step in the assembly of 30S ribosomal subunit, possibly for assembly of the head region. Essential for efficient processing of 16S rRNA. May be needed both before and after RbfA during the maturation of 16S rRNA. It has affinity for free ribosomal 30S subunits but not for 70S ribosomes. The sequence is that of Ribosome maturation factor RimM from Christiangramia forsetii (strain DSM 17595 / CGMCC 1.15422 / KT0803) (Gramella forsetii).